Consider the following 151-residue polypeptide: Small ribosomal subunit protein uS15y (151 aa).

It belongs to the universal ribosomal protein uS15 family.

This is Small ribosomal subunit protein uS15y from Oryza sativa subsp. japonica (Rice).